We begin with the raw amino-acid sequence, 620 residues long: UvrABC system protein C (620 aa).

A GIY-YIG domain is found at 13-92 (DKPGVYIMKN…IKKYSPRYNI (80 aa)). The UVR domain occupies 204–239 (TSIIKKLKLEMEKAAEELEFEKAAKIRDRILAIELI).

It belongs to the UvrC family. In terms of assembly, interacts with UvrB in an incision complex.

The protein localises to the cytoplasm. Functionally, the UvrABC repair system catalyzes the recognition and processing of DNA lesions. UvrC both incises the 5' and 3' sides of the lesion. The N-terminal half is responsible for the 3' incision and the C-terminal half is responsible for the 5' incision. The protein is UvrABC system protein C of Clostridium perfringens (strain ATCC 13124 / DSM 756 / JCM 1290 / NCIMB 6125 / NCTC 8237 / Type A).